Consider the following 1741-residue polypeptide: Protein wings apart-like (1741 aa).

Disordered stretches follow at residues 68–100 (SPSQ…FFKS), 119–277 (CGAG…EVAA), 291–472 (SSTF…KPPK), 490–612 (KAAA…VQED), 675–810 (LAVL…ASVN), 823–963 (KAEA…QRGA), 1038–1068 (AAGK…STLR), 1112–1141 (SAAG…RVDR), and 1708–1741 (TSST…SSHR). Over residues 165-174 (RKRKSPKKKA) the composition is skewed to basic residues. Residues 175 to 185 (ATTSASTPSTP) are compositionally biased toward low complexity. Thr258 carries the phosphothreonine modification. Residues 309-334 (APSASASTSSQLPSASGSASNPPSAS) are compositionally biased toward low complexity. At Ser355 the chain carries Phosphoserine. Over residues 367–377 (AHQNQLNQLSV) the composition is skewed to polar residues. The span at 408 to 426 (AADSVDGSSAAVGGASAGD) shows a compositional bias: low complexity. The span at 438 to 456 (PNEDEEEEEEEEDEEEEPP) shows a compositional bias: acidic residues. The segment covering 503–512 (SRSKKHKHKQ) has biased composition (basic residues). Low complexity-rich tracts occupy residues 515–529 (AAGS…ATPA) and 553–568 (QHTP…LHPQ). Over residues 586 to 604 (SQSSVLGSISSKGNSTPQL) the composition is skewed to polar residues. 2 stretches are compositionally biased toward low complexity: residues 796 to 810 (NAAA…ASVN) and 849 to 859 (QQVTQVLQQEP). A compositionally biased stretch (acidic residues) spans 860–873 (VPEEQETPDAEEEQ). A compositionally biased stretch (basic and acidic residues) spans 880–894 (PHTDHREHSPDHDPD). Phosphoserine is present on Ser888. 2 stretches are compositionally biased toward low complexity: residues 939–952 (GAAN…AAAA) and 1047–1065 (GDSP…SSAS). The span at 1117-1136 (SAGGTGATTGGGGATGGGGP) shows a compositional bias: gly residues. Residues 1140-1648 (DRKTKDYYPV…EKYHTFMNLT (509 aa)) enclose the WAPL domain. A compositionally biased stretch (low complexity) spans 1708 to 1730 (TSSTTVGSGSAPSSTSATGTTRA).

This sequence belongs to the WAPL family.

Has a role in female meiotic chromosome segregation in females; proximal heterochromatin is involved in chromosome pairing during female meiosis. Is a dominant suppressor of both white and Stubble position-effect variegation (PEV), while it is a weak enhancer of brown variegation. This Drosophila melanogaster (Fruit fly) protein is Protein wings apart-like.